The following is a 264-amino-acid chain: 4-oxalocrotonate decarboxylase (264 aa).

Belongs to the hydratase/decarboxylase family.

It carries out the reaction (3E)-2-oxohex-3-enedioate + H(+) = 2-oxopent-4-enoate + CO2. It participates in xenobiotic degradation; toluene degradation. In Pseudomonas putida (Arthrobacter siderocapsulatus), this protein is 4-oxalocrotonate decarboxylase (xylI).